A 216-amino-acid chain; its full sequence is Large ribosomal subunit protein eL15 (216 aa).

It belongs to the eukaryotic ribosomal protein eL15 family.

In Metallosphaera sedula (strain ATCC 51363 / DSM 5348 / JCM 9185 / NBRC 15509 / TH2), this protein is Large ribosomal subunit protein eL15.